Here is a 434-residue protein sequence, read N- to C-terminus: (3,5-dihydroxyphenyl)acetyl-CoA 1,2-dioxygenase (434 aa).

Substrate-binding positions include Asp184, Glu190, 223–226 (HPRY), 234–239 (AGINLK), Gly293, 322–324 (IPG), and Gln413.

This sequence belongs to the enoyl-CoA hydratase/isomerase family. Homohexamer; dimer of trimers.

It carries out the reaction (3,5-dihydroxyphenyl)acetyl-CoA + O2 = 2-(3,5-dihydroxyphenyl)-2-oxoacetate + CoA + H(+). Its function is as follows. Involved in the biosynthesis of the nonproteinogenic amino acid monomer (S)-3,5-dihydroxyphenylglycine (Dpg) responsible of the production of vancomycin and teicoplanin antibiotics. Catalyzes the unusual conversion 3,5-dihydroxyphenylacetyl-CoA (DPA-CoA) to 3,5-dihydroxyphenylglyoxylate. DpgC performed a net four-electron oxidation of the benzylic carbon of DPA-CoA and the hydrolysis of the thioester bond to generate free CoA. It can also use phenylacetyl-CoA (PA-CoA) as substrate. The sequence is that of (3,5-dihydroxyphenyl)acetyl-CoA 1,2-dioxygenase (dpgC) from Amycolatopsis orientalis (Nocardia orientalis).